A 493-amino-acid polypeptide reads, in one-letter code: Cobyric acid synthase (493 aa).

In terms of domain architecture, GATase cobBQ-type spans 252–441; the sequence is DLKITVIRLP…LHGLLENGPW (190 aa). Cys-333 functions as the Nucleophile in the catalytic mechanism. Residue His-433 is part of the active site.

It belongs to the CobB/CobQ family. CobQ subfamily.

The protein operates within cofactor biosynthesis; adenosylcobalamin biosynthesis. Catalyzes amidations at positions B, D, E, and G on adenosylcobyrinic A,C-diamide. NH(2) groups are provided by glutamine, and one molecule of ATP is hydrogenolyzed for each amidation. This Thermosynechococcus vestitus (strain NIES-2133 / IAM M-273 / BP-1) protein is Cobyric acid synthase.